The primary structure comprises 133 residues: Ribosome-binding factor A (133 aa).

It belongs to the RbfA family. Monomer. Binds 30S ribosomal subunits, but not 50S ribosomal subunits or 70S ribosomes.

The protein resides in the cytoplasm. In terms of biological role, one of several proteins that assist in the late maturation steps of the functional core of the 30S ribosomal subunit. Associates with free 30S ribosomal subunits (but not with 30S subunits that are part of 70S ribosomes or polysomes). Required for efficient processing of 16S rRNA. May interact with the 5'-terminal helix region of 16S rRNA. The sequence is that of Ribosome-binding factor A from Yersinia enterocolitica.